The chain runs to 148 residues: 3-dehydroquinate dehydratase (148 aa).

The active-site Proton acceptor is Y22. The substrate site is built by N73, H79, and D86. Catalysis depends on H99, which acts as the Proton donor. Substrate contacts are provided by residues 100–101 (LS) and R110.

Belongs to the type-II 3-dehydroquinase family. In terms of assembly, homododecamer.

It catalyses the reaction 3-dehydroquinate = 3-dehydroshikimate + H2O. It functions in the pathway metabolic intermediate biosynthesis; chorismate biosynthesis; chorismate from D-erythrose 4-phosphate and phosphoenolpyruvate: step 3/7. In terms of biological role, catalyzes a trans-dehydration via an enolate intermediate. In Prochlorococcus marinus (strain MIT 9211), this protein is 3-dehydroquinate dehydratase.